A 171-amino-acid chain; its full sequence is Peptide deformylase (171 aa).

C91 and H133 together coordinate Fe cation. E134 is an active-site residue. H137 is a binding site for Fe cation.

It belongs to the polypeptide deformylase family. Requires Fe(2+) as cofactor.

It catalyses the reaction N-terminal N-formyl-L-methionyl-[peptide] + H2O = N-terminal L-methionyl-[peptide] + formate. Functionally, removes the formyl group from the N-terminal Met of newly synthesized proteins. Requires at least a dipeptide for an efficient rate of reaction. N-terminal L-methionine is a prerequisite for activity but the enzyme has broad specificity at other positions. The protein is Peptide deformylase of Haemophilus ducreyi (strain 35000HP / ATCC 700724).